The sequence spans 500 residues: Aromatic-L-amino-acid decarboxylase (500 aa).

P102 is a binding site for L-tryptophan. Residue S168 coordinates pyridoxal 5'-phosphate. Position 203 (H203) interacts with L-tryptophan. T262 provides a ligand contact to pyridoxal 5'-phosphate. Residue H318 participates in L-tryptophan binding. K319 is modified (N6-(pyridoxal phosphate)lysine). Residue Y348 coordinates L-tryptophan.

This sequence belongs to the group II decarboxylase family. In terms of assembly, homodimer. It depends on pyridoxal 5'-phosphate as a cofactor.

The catalysed reaction is L-tryptophan + H(+) = tryptamine + CO2. It catalyses the reaction 5-hydroxy-L-tryptophan + H(+) = serotonin + CO2. Its function is as follows. Catalyzes the decarboxylation of L-tryptophan to tryptamine and L-5-hydroxytryptophan to serotonin, respectively. This chain is Aromatic-L-amino-acid decarboxylase, found in Catharanthus roseus (Madagascar periwinkle).